A 396-amino-acid polypeptide reads, in one-letter code: NADH-quinone oxidoreductase subunit D (396 aa).

The protein belongs to the complex I 49 kDa subunit family. As to quaternary structure, NDH-1 is composed of 14 different subunits. Subunits NuoB, C, D, E, F, and G constitute the peripheral sector of the complex.

The protein localises to the cell inner membrane. The catalysed reaction is a quinone + NADH + 5 H(+)(in) = a quinol + NAD(+) + 4 H(+)(out). NDH-1 shuttles electrons from NADH, via FMN and iron-sulfur (Fe-S) centers, to quinones in the respiratory chain. The immediate electron acceptor for the enzyme in this species is believed to be ubiquinone. Couples the redox reaction to proton translocation (for every two electrons transferred, four hydrogen ions are translocated across the cytoplasmic membrane), and thus conserves the redox energy in a proton gradient. This Orientia tsutsugamushi (strain Ikeda) (Rickettsia tsutsugamushi) protein is NADH-quinone oxidoreductase subunit D.